A 46-amino-acid chain; its full sequence is Lariatin (46 aa).

Residues 1-26 (MTSQPSKKTYNAPSLVQRGKFARTTA) constitute a propeptide that is removed on maturation. The isoglutamyl glycine isopeptide (Gly-Glu) cross-link spans 27–34 (GSQLVYRE).

The linear precursor LarA is probably cleaved by the putative peptidase LarD, generating linear 18-residue Lariatin-A or 20-residue Lariatin-B. These linear peptides are probably cross-linked by LarB. Finally, lariatins A and B may be exported by ABC transporter LarE.

Its function is as follows. Peptide antibiotic with selective activity against Mycobacterium species (M.smegmatis, MIC=3.13 ug/ml and M.tuberculosis, MIC=0.39 ug/ml). it is plausible that the target of lariatins lies within the cell wall in mycobacteria. Peptide antibiotic with selective activity against Mycobacterium species (M.smegmatis, MIC=6.25 ug/ml). The polypeptide is Lariatin (Rhodococcus jostii).